A 382-amino-acid polypeptide reads, in one-letter code: Protein NASP homolog 1 (382 aa).

The tract at residues 1-39 (MDTENIADASDIRVKDASGDSDEKGNGTTTEEETVEQKE) is disordered. Over residues 10 to 25 (SDIRVKDASGDSDEKG) the composition is skewed to basic and acidic residues. Residues 42 to 75 (LAELLAAGRRALKVNDIDKASDSLSEATELSSEI) form a TPR 1 repeat. The segment covering 103–112 (QLLKGPGEKE) has biased composition (basic and acidic residues). The interval 103–151 (QLLKGPGEKESGDEEQAGNSDDKTDEENGETEKEDGEESGEEEDDDDDT) is disordered. Acidic residues predominate over residues 125–150 (KTDEENGETEKEDGEESGEEEDDDDD). TPR repeat units follow at residues 191–224 (ADVL…QRNV) and 233–266 (AQTY…LIAR). A coiled-coil region spans residues 264 to 304 (IARQTELKHELERGVDDKEKKSEFENELKELEEMMPGVEEM). The tract at residues 337–382 (PQEAGDQKEANDISSLVRRPAKRAVDAPTDNQAVKKEKEEEGTTSI) is disordered. Residues 369–382 (AVKKEKEEEGTTSI) show a composition bias toward basic and acidic residues.

Belongs to the NASP family. As to quaternary structure, may interact with zinc finger protein tra-4 and histone deacetylase hda-1.

It localises to the nucleus. Promotes normal hermaphrodite (XX) development, in concert with zinc finger protein tra-4 and histone deacetylase hda-1, perhaps as components of a complex. May act redundantly with nasp-2. Involved in innate immune response to B.thuringiensis strain DB27 and S.aureus bacteria. May play a role in the uptake or spreading of dsRNA. The chain is Protein NASP homolog 1 from Caenorhabditis elegans.